The primary structure comprises 100 residues: Urease subunit gamma (100 aa).

Belongs to the urease gamma subunit family. In terms of assembly, heterotrimer of UreA (gamma), UreB (beta) and UreC (alpha) subunits. Three heterotrimers associate to form the active enzyme.

The protein localises to the cytoplasm. It catalyses the reaction urea + 2 H2O + H(+) = hydrogencarbonate + 2 NH4(+). It participates in nitrogen metabolism; urea degradation; CO(2) and NH(3) from urea (urease route): step 1/1. In Synechococcus sp. (strain CC9902), this protein is Urease subunit gamma.